A 406-amino-acid polypeptide reads, in one-letter code: Phosphopentomutase (406 aa).

Residues Asp10, Asp305, His310, Asp346, His347, and His358 each coordinate Mn(2+).

Belongs to the phosphopentomutase family. It depends on Mn(2+) as a cofactor.

The protein localises to the cytoplasm. It catalyses the reaction 2-deoxy-alpha-D-ribose 1-phosphate = 2-deoxy-D-ribose 5-phosphate. It carries out the reaction alpha-D-ribose 1-phosphate = D-ribose 5-phosphate. The protein operates within carbohydrate degradation; 2-deoxy-D-ribose 1-phosphate degradation; D-glyceraldehyde 3-phosphate and acetaldehyde from 2-deoxy-alpha-D-ribose 1-phosphate: step 1/2. Functionally, isomerase that catalyzes the conversion of deoxy-ribose 1-phosphate (dRib-1-P) and ribose 1-phosphate (Rib-1-P) to deoxy-ribose 5-phosphate (dRib-5-P) and ribose 5-phosphate (Rib-5-P), respectively. The chain is Phosphopentomutase from Methylorubrum extorquens (strain PA1) (Methylobacterium extorquens).